A 326-amino-acid chain; its full sequence is Tryptophan--tRNA ligase (326 aa).

Residues Gln-11 to Thr-13 and Gly-19 to Asn-20 contribute to the ATP site. The short motif at Pro-12–Asn-20 is the 'HIGH' region element. An L-tryptophan-binding site is contributed by Asp-135. Residues Gly-147–Asp-149, Val-186, and Lys-195–Ser-199 contribute to the ATP site. The short motif at Lys-195–Ser-199 is the 'KMSKS' region element.

Belongs to the class-I aminoacyl-tRNA synthetase family. As to quaternary structure, homodimer.

The protein localises to the cytoplasm. It catalyses the reaction tRNA(Trp) + L-tryptophan + ATP = L-tryptophyl-tRNA(Trp) + AMP + diphosphate + H(+). Its function is as follows. Catalyzes the attachment of tryptophan to tRNA(Trp). The chain is Tryptophan--tRNA ligase from Helicobacter pylori (strain ATCC 700392 / 26695) (Campylobacter pylori).